The following is a 588-amino-acid chain: Nucleoporin ndc-1 (588 aa).

The segment covering 1-12 (MMGDSHSSFTTT) has biased composition (polar residues). Positions 1 to 55 (MMGDSHSSFTTTTDEHLYNQFSPGRRKNDFPAASSSSSSPNLRRSPNRTVSSPRV) are disordered. Topologically, residues 1–79 (MMGDSHSSFT…FQAEISVRKR (79 aa)) are cytoplasmic. Residues 31–48 (PAASSSSSSPNLRRSPNR) are compositionally biased toward low complexity. Residues 80 to 100 (LAGAACGYLSTIFFIVTVSIL) traverse the membrane as a helical segment. Residues 101-122 (KLTIWAPFSSVQDSLAWWIYPN) are Perinuclear space-facing. The helical transmembrane segment at 123 to 143 (AWASIIFVGIASVAMSLFSII) threads the bilayer. Residues 144 to 159 (KFCKVDQLPRLAATDT) are Cytoplasmic-facing. A helical membrane pass occupies residues 160–180 (FALAGVALEFVTRLTFVYTAF). The Perinuclear space portion of the chain corresponds to 181–190 (CVADFSFSRE). A helical membrane pass occupies residues 191-211 (FAFVAISLAIAISSALVVFRS). Topologically, residues 212–255 (DYQLNFSHIQVNSVKTLIDFGTSLPYANISEICGIDAAISYTAA) are cytoplasmic. The helical transmembrane segment at 256 to 276 (VALILVVGPMVSGFSAWWLLL) threads the bilayer. Position 277 (Asn277) is a topological domain, perinuclear space. A helical membrane pass occupies residues 278-298 (IPFHVVLFGLCFTQQFYSKIS). The Cytoplasmic segment spans residues 299–588 (MKIVNQIVMK…IRMICLTDEL (290 aa)).

This sequence belongs to the NDC1 family.

Its subcellular location is the nucleus. It localises to the nuclear pore complex. It is found in the nucleus membrane. Its function is as follows. Component of the nuclear pore complex (NPC), which plays a key role in de novo assembly and insertion of NPC in the nuclear envelope. Plays a role in postmitotic nuclear pore complex assembly potentially by promoting localization of nuclear pore complex proteins to the nuclear rim. This is Nucleoporin ndc-1 from Caenorhabditis elegans.